Consider the following 600-residue polypeptide: Proline--tRNA ligase (600 aa).

It belongs to the class-II aminoacyl-tRNA synthetase family. ProS type 1 subfamily. Homodimer.

The protein localises to the cytoplasm. The catalysed reaction is tRNA(Pro) + L-proline + ATP = L-prolyl-tRNA(Pro) + AMP + diphosphate. Functionally, catalyzes the attachment of proline to tRNA(Pro) in a two-step reaction: proline is first activated by ATP to form Pro-AMP and then transferred to the acceptor end of tRNA(Pro). As ProRS can inadvertently accommodate and process non-cognate amino acids such as alanine and cysteine, to avoid such errors it has two additional distinct editing activities against alanine. One activity is designated as 'pretransfer' editing and involves the tRNA(Pro)-independent hydrolysis of activated Ala-AMP. The other activity is designated 'posttransfer' editing and involves deacylation of mischarged Ala-tRNA(Pro). The misacylated Cys-tRNA(Pro) is not edited by ProRS. This is Proline--tRNA ligase from Prochlorococcus marinus subsp. pastoris (strain CCMP1986 / NIES-2087 / MED4).